We begin with the raw amino-acid sequence, 547 residues long: CTP synthase (547 aa).

Residues 1–265 (MARFVFITGG…DQAVLDAFSI (265 aa)) form an amidoligase domain region. Residue S13 participates in CTP binding. UTP is bound at residue S13. ATP-binding positions include 14–19 (SLGKGL) and D71. Positions 71 and 139 each coordinate Mg(2+). CTP contacts are provided by residues 146–148 (DIE), 186–191 (KTKPTQ), and K222. Residues 186-191 (KTKPTQ) and K222 each bind UTP. The 256-residue stretch at 291 to 546 (NVAIVGKYTQ…VRAAKEVSRL (256 aa)) folds into the Glutamine amidotransferase type-1 domain. Position 353 (G353) interacts with L-glutamine. The active-site Nucleophile; for glutamine hydrolysis is C380. L-glutamine contacts are provided by residues 381–384 (LGMQ), E404, and R474. Catalysis depends on residues H519 and E521.

It belongs to the CTP synthase family. As to quaternary structure, homotetramer.

It catalyses the reaction UTP + L-glutamine + ATP + H2O = CTP + L-glutamate + ADP + phosphate + 2 H(+). The enzyme catalyses L-glutamine + H2O = L-glutamate + NH4(+). It carries out the reaction UTP + NH4(+) + ATP = CTP + ADP + phosphate + 2 H(+). Its pathway is pyrimidine metabolism; CTP biosynthesis via de novo pathway; CTP from UDP: step 2/2. Allosterically activated by GTP, when glutamine is the substrate; GTP has no effect on the reaction when ammonia is the substrate. The allosteric effector GTP functions by stabilizing the protein conformation that binds the tetrahedral intermediate(s) formed during glutamine hydrolysis. Inhibited by the product CTP, via allosteric rather than competitive inhibition. Its function is as follows. Catalyzes the ATP-dependent amination of UTP to CTP with either L-glutamine or ammonia as the source of nitrogen. Regulates intracellular CTP levels through interactions with the four ribonucleotide triphosphates. This Dinoroseobacter shibae (strain DSM 16493 / NCIMB 14021 / DFL 12) protein is CTP synthase.